The following is a 359-amino-acid chain: Histidinol-phosphate aminotransferase (359 aa).

N6-(pyridoxal phosphate)lysine is present on Lys-217.

It belongs to the class-II pyridoxal-phosphate-dependent aminotransferase family. Histidinol-phosphate aminotransferase subfamily. Homodimer. It depends on pyridoxal 5'-phosphate as a cofactor.

The catalysed reaction is L-histidinol phosphate + 2-oxoglutarate = 3-(imidazol-4-yl)-2-oxopropyl phosphate + L-glutamate. The protein operates within amino-acid biosynthesis; L-histidine biosynthesis; L-histidine from 5-phospho-alpha-D-ribose 1-diphosphate: step 7/9. The protein is Histidinol-phosphate aminotransferase of Salmonella arizonae (strain ATCC BAA-731 / CDC346-86 / RSK2980).